Reading from the N-terminus, the 64-residue chain is DNA-binding protein 7b (64 aa).

Residues lysine 5 and lysine 7 each carry the N6-methyllysine modification.

Belongs to the 7 kDa DNA-binding/endoribonuclease P2 family. As to quaternary structure, monomer. In terms of processing, lys-5 and Lys-7 may be methylated.

The protein resides in the cytoplasm. In terms of biological role, can constrain negative DNA supercoils. May be involved in maintaining the integrity of the genome at high temperature. The sequence is that of DNA-binding protein 7b from Saccharolobus shibatae (strain ATCC 51178 / DSM 5389 / JCM 8931 / NBRC 15437 / B12) (Sulfolobus shibatae).